A 363-amino-acid polypeptide reads, in one-letter code: Glutamate--cysteine ligase (363 aa).

Belongs to the glutamate--cysteine ligase type 2 family. YbdK subfamily.

The enzyme catalyses L-cysteine + L-glutamate + ATP = gamma-L-glutamyl-L-cysteine + ADP + phosphate + H(+). Functionally, catalyzes the synthesis of gamma-glutamylcysteine (gamma-GC), the main low-molecular-weight thiol compound instead of glutathione in halophilic archaea. The polypeptide is Glutamate--cysteine ligase (Haloquadratum walsbyi (strain DSM 16790 / HBSQ001)).